Reading from the N-terminus, the 994-residue chain is NACHT, LRR and PYD domains-containing protein 4 (994 aa).

The 94-residue stretch at 1 to 94 (MAASFFSDFG…CMKVMRERTG (94 aa)) folds into the Pyrin domain. Positions 149 to 472 (RTVIIQGPQG…FYLLKSHLDH (324 aa)) constitute an NACHT domain. Residue 155–162 (GPQGIGKT) coordinates ATP. LRR repeat units follow at residues 637-660 (SGHL…TWCN), 698-721 (YLSF…LNYP), 722-745 (AGNV…VLAG), 750-777 (NKKL…LCSP), 806-833 (NKSV…ALKH), 863-886 (NQNL…LLCR), 920-943 (SKTL…VLCE), and 949-972 (ECAL…LLTA).

Belongs to the NLRP family. Interacts with CHUK/IKKA, inhibiting its kinase activity.

May be involved in inflammation and recognition of cytosolic pathogen-associated molecular patterns (PAMPs) not intercepted by membrane-bound receptors. Acts as a negative regulator of the type I interferon signaling pathway by serving as an adapter to promote DTX4-mediated ubiquitination of activated TBK1, and its subsequent degradation. Suppresses NF-kappaB induction by the cytokines TNFA and IL1B, suggesting that it operates at a point of convergence in these two cytokine signaling pathways. The protein is NACHT, LRR and PYD domains-containing protein 4 of Homo sapiens (Human).